The primary structure comprises 197 residues: Imidazoleglycerol-phosphate dehydratase (197 aa).

It belongs to the imidazoleglycerol-phosphate dehydratase family.

Its subcellular location is the cytoplasm. The enzyme catalyses D-erythro-1-(imidazol-4-yl)glycerol 3-phosphate = 3-(imidazol-4-yl)-2-oxopropyl phosphate + H2O. The protein operates within amino-acid biosynthesis; L-histidine biosynthesis; L-histidine from 5-phospho-alpha-D-ribose 1-diphosphate: step 6/9. The polypeptide is Imidazoleglycerol-phosphate dehydratase (Nitrobacter hamburgensis (strain DSM 10229 / NCIMB 13809 / X14)).